The following is a 343-amino-acid chain: Probable dual-specificity RNA methyltransferase RlmN (343 aa).

Glutamate 93 (proton acceptor) is an active-site residue. The 222-residue stretch at 99-320 (TDDRATLCVS…NAKGVVCTIR (222 aa)) folds into the Radical SAM core domain. A disulfide bond links cysteine 106 and cysteine 331. Residues cysteine 113, cysteine 117, and cysteine 120 each coordinate [4Fe-4S] cluster. S-adenosyl-L-methionine contacts are provided by residues 158-159 (GE), serine 190, 212-214 (SLH), and histidine 288. Residue cysteine 331 is the S-methylcysteine intermediate of the active site.

This sequence belongs to the radical SAM superfamily. RlmN family. The cofactor is [4Fe-4S] cluster.

The protein resides in the cytoplasm. The catalysed reaction is adenosine(2503) in 23S rRNA + 2 reduced [2Fe-2S]-[ferredoxin] + 2 S-adenosyl-L-methionine = 2-methyladenosine(2503) in 23S rRNA + 5'-deoxyadenosine + L-methionine + 2 oxidized [2Fe-2S]-[ferredoxin] + S-adenosyl-L-homocysteine. It catalyses the reaction adenosine(37) in tRNA + 2 reduced [2Fe-2S]-[ferredoxin] + 2 S-adenosyl-L-methionine = 2-methyladenosine(37) in tRNA + 5'-deoxyadenosine + L-methionine + 2 oxidized [2Fe-2S]-[ferredoxin] + S-adenosyl-L-homocysteine. Functionally, specifically methylates position 2 of adenine 2503 in 23S rRNA and position 2 of adenine 37 in tRNAs. This chain is Probable dual-specificity RNA methyltransferase RlmN, found in Parabacteroides distasonis (strain ATCC 8503 / DSM 20701 / CIP 104284 / JCM 5825 / NCTC 11152).